Reading from the N-terminus, the 122-residue chain is Large ribosomal subunit protein uL18 (122 aa).

It belongs to the universal ribosomal protein uL18 family. Part of the 50S ribosomal subunit; part of the 5S rRNA/L5/L18/L25 subcomplex. Contacts the 5S and 23S rRNAs.

Its function is as follows. This is one of the proteins that bind and probably mediate the attachment of the 5S RNA into the large ribosomal subunit, where it forms part of the central protuberance. The chain is Large ribosomal subunit protein uL18 from Mycobacterium tuberculosis (strain ATCC 25177 / H37Ra).